Here is a 360-residue protein sequence, read N- to C-terminus: Glutamine synthetase (360 aa).

In terms of domain architecture, GS beta-grasp spans I26 to G105. The GS catalytic domain maps to Y112 to N360.

Belongs to the glutamine synthetase family. As to quaternary structure, homooctamer.

The protein resides in the cytoplasm. The catalysed reaction is L-glutamate + NH4(+) + ATP = L-glutamine + ADP + phosphate + H(+). This chain is Glutamine synthetase (GLN1), found in Colletotrichum gloeosporioides (Anthracnose fungus).